A 130-amino-acid polypeptide reads, in one-letter code: Small ribosomal subunit protein bS16 (130 aa).

Residues Ala80–Glu130 form a disordered region. Basic and acidic residues predominate over residues Lys99–Ala109. The segment covering Lys110 to Glu130 has biased composition (low complexity).

It belongs to the bacterial ribosomal protein bS16 family.

The sequence is that of Small ribosomal subunit protein bS16 from Jannaschia sp. (strain CCS1).